The following is a 570-amino-acid chain: Interleukin-1 receptor accessory protein (570 aa).

The signal sequence occupies residues 1–20; the sequence is MTLLWCVVSLYFYGILQSDA. Ig-like C2-type domains follow at residues 21–128, 136–226, and 242–350; these read SERC…VAFP, SCFN…FHLT, and PPVI…VKQK. Residues 21–367 are Extracellular-facing; sequence SERCDDWGLD…VELACGFGAT (347 aa). 5 cysteine pairs are disulfide-bonded: Cys-24–Cys-122, Cys-47–Cys-114, Cys-137–Cys-181, Cys-160–Cys-212, and Cys-266–Cys-332. Asn-57 is a glycosylation site (N-linked (GlcNAc...) asparagine). Residues 69-85 form an essential for interaction with PTPRD region; it reads IWYWTRQDRDLEEPINF. N-linked (GlcNAc...) asparagine glycosylation is found at Asn-107, Asn-111, and Asn-118. Asn-196, Asn-209, and Asn-299 each carry an N-linked (GlcNAc...) asparagine glycan. The helical transmembrane segment at 368 to 388 threads the bilayer; that stretch reads VLLVVILIVVYHVYWLEMVLF. Over 389–570 the chain is Cytoplasmic; it reads YRAHFGTDET…GLSYSSLKNV (182 aa). The TIR domain occupies 403–546; that stretch reads KEYDIYVSYA…RFWKQLQVAM (144 aa). Glu-482 is an active-site residue. Residues 549–570 form a disordered region; sequence KKSPRRSSSDEQGLSYSSLKNV. A Phosphoserine modification is found at Ser-557. Residues 558-570 show a composition bias toward polar residues; sequence DEQGLSYSSLKNV.

It belongs to the interleukin-1 receptor family. In terms of assembly, the interleukin-36 receptor complex is a heterodimer of IL1RL2 and IL1RAP; the association is inhibited by IL36RN. The interleukin-1 receptor complex is a heterodimer of IL1R1 and IL1RAP. Associates with IL1R2 to form a non-signaling interleukin-1 receptor complex. Interacts with IL-33-bound IL1RL1 to form the minimal interleukin-33 signaling complex with a 1:1:1 stoichiometry. Interacts with KIT (independently of stimulation with KITLG/SCF). A mast cell-specific KITLG/SCF-induced interleukin-33 signaling complex contains IL1RL1, IL1RAP, KIT and MYD88. Interacts (via the first immunoglobilin domain) with PTPRD (via the third immunoglobilin domain); induces pre- and postsynaptic differentiation of neurons.

The protein localises to the cell membrane. It localises to the secreted. The catalysed reaction is NAD(+) + H2O = ADP-D-ribose + nicotinamide + H(+). Functionally, coreceptor for IL1RL2 in the IL-36 signaling system. Coreceptor with IL1R1 in the IL-1 signaling system. Associates with IL1R1 bound to IL1B to form the high affinity interleukin-1 receptor complex which mediates interleukin-1-dependent activation of NF-kappa-B and other pathways. Signaling involves the recruitment of adapter molecules such as TOLLIP, MYD88, and IRAK1 or IRAK2 via the respective TIR domains of the receptor/coreceptor subunits. Recruits TOLLIP to the signaling complex. Does not bind to interleukin-1 alone; binding of IL1RN to IL1R1, prevents its association with IL1R1 to form a signaling complex. The cellular response is modulated through a non-signaling association with the membrane IL1R2 decoy receptor. Coreceptor for IL1RL1 in the IL-33 signaling system. Can bidirectionally induce pre- and postsynaptic differentiation of neurons by trans-synaptically binding to PTPRD. May play a role in IL1B-mediated costimulation of IFNG production from T-helper 1 (Th1) cells. Its function is as follows. Associates with secreted ligand-bound IL1R2 and increases the affinity of secreted IL1R2 for IL1B; this complex formation may be the dominant mechanism for neutralization of IL1B by secreted/soluble receptors. Enhances the ability of secreted IL1R1 to inhibit IL-33 signaling. The chain is Interleukin-1 receptor accessory protein (IL1RAP) from Macaca mulatta (Rhesus macaque).